The primary structure comprises 390 residues: Protein STRICTOSIDINE SYNTHASE-LIKE 3 (390 aa).

The N-terminal stretch at 1–25 (MAMSILAKIFLVFAIYCAIDPFSHS) is a signal peptide. N-linked (GlcNAc...) asparagine glycosylation is found at N95 and N108.

Belongs to the strictosidine synthase family.

Its subcellular location is the vacuole. This Arabidopsis thaliana (Mouse-ear cress) protein is Protein STRICTOSIDINE SYNTHASE-LIKE 3.